Here is a 427-residue protein sequence, read N- to C-terminus: Serine--tRNA ligase (427 aa).

L-serine is bound at residue 236–238 (TAE). Residue 267-269 (RSE) coordinates ATP. Glu-290 serves as a coordination point for L-serine. Residue 354 to 357 (EISS) coordinates ATP. Ser-388 serves as a coordination point for L-serine.

Belongs to the class-II aminoacyl-tRNA synthetase family. Type-1 seryl-tRNA synthetase subfamily. Homodimer. The tRNA molecule binds across the dimer.

Its subcellular location is the cytoplasm. The catalysed reaction is tRNA(Ser) + L-serine + ATP = L-seryl-tRNA(Ser) + AMP + diphosphate + H(+). It carries out the reaction tRNA(Sec) + L-serine + ATP = L-seryl-tRNA(Sec) + AMP + diphosphate + H(+). The protein operates within aminoacyl-tRNA biosynthesis; selenocysteinyl-tRNA(Sec) biosynthesis; L-seryl-tRNA(Sec) from L-serine and tRNA(Sec): step 1/1. Functionally, catalyzes the attachment of serine to tRNA(Ser). Is also able to aminoacylate tRNA(Sec) with serine, to form the misacylated tRNA L-seryl-tRNA(Sec), which will be further converted into selenocysteinyl-tRNA(Sec). This chain is Serine--tRNA ligase, found in Psychrobacter arcticus (strain DSM 17307 / VKM B-2377 / 273-4).